Consider the following 367-residue polypeptide: PR domain zinc finger protein 12 (367 aa).

Positions 86-203 (AEVIIAQSSI…PDQELLVWYG (118 aa)) constitute an SET domain. 3 consecutive C2H2-type zinc fingers follow at residues 243 to 265 (MRCVICHRGFNSRSNLRSHMRIH), 271 to 293 (FVCRFCNRRFSQSSTLRNHVRLH), and 299 to 323 (YKCQVCQSAYSQLAGLRAHQKSARH). The segment at 318 to 337 (QKSARHRPPSTALQAHSPAL) is disordered.

It belongs to the class V-like SAM-binding methyltransferase superfamily. Interacts with EHMT2. As to expression, not found in adult tissues except in dorsal root ganglia.

The protein localises to the nucleus. Its function is as follows. Transcriptional regulator necessary for the development of nociceptive neurons, playing a key role in determining the nociceptive lineage from neural crest cell progenitors. Initiates neurogenesis and activates downstream pro-neuronal transcription factors, such as NEUROD1, BRN3A, and ISL1, specifically within nociceptive neurons, while repressing non-nociceptor cell fates. Essential for the proper function of nociceptors in adults, influencing both their excitability and their gene expression, thereby impacting how these neurons respond to various pain stimuli. The polypeptide is PR domain zinc finger protein 12 (PRDM12) (Homo sapiens (Human)).